A 71-amino-acid polypeptide reads, in one-letter code: Small ribosomal subunit protein bS21 (71 aa).

Over residues 50 to 59 (AAAVKRHAKK) the composition is skewed to basic residues. Positions 50–71 (AAAVKRHAKKVQREQRRAVRLY) are disordered. Over residues 60 to 71 (VQREQRRAVRLY) the composition is skewed to basic and acidic residues.

Belongs to the bacterial ribosomal protein bS21 family.

This is Small ribosomal subunit protein bS21 from Pseudomonas entomophila (strain L48).